The chain runs to 238 residues: Probable transcriptional regulatory protein Sde_1551 (238 aa).

Belongs to the TACO1 family.

The protein resides in the cytoplasm. The sequence is that of Probable transcriptional regulatory protein Sde_1551 from Saccharophagus degradans (strain 2-40 / ATCC 43961 / DSM 17024).